We begin with the raw amino-acid sequence, 549 residues long: Copalyl diphosphate synthase (549 aa).

Positions 321 to 326 match the DXDDTA motif motif; that stretch reads DADDTA. Positions 451–457 match the QXXDGSW motif motif; it reads QRDDGSW.

It belongs to the terpene synthase family. Mg(2+) is required as a cofactor.

It catalyses the reaction (2E,6E,10E)-geranylgeranyl diphosphate = (+)-copalyl diphosphate. Functionally, involved in the biosynthesis of the labdane-type bicyclic diterpene labda-8(17),12(E),14-triene. Catalyzes the conversion of geranylgeranyl diphosphate (GGDP) into (+)-copalyl diphosphate. This chain is Copalyl diphosphate synthase, found in Streptomyces anulatus (Streptomyces chrysomallus).